Here is a 44-residue protein sequence, read N- to C-terminus: Cuticle protein CP466 (44 aa).

2 repeat units span residues 3–20 and 27–44.

In terms of tissue distribution, calcified shell.

This chain is Cuticle protein CP466, found in Cancer pagurus (Rock crab).